The following is a 207-amino-acid chain: Neuroendocrine protein 7B2 (207 aa).

Positions 1–22 (MVSTMLSGLVLWLTFGWTPALA) are cleaved as a signal peptide. Cysteines 116 and 125 form a disulfide. Phosphoserine occurs at positions 136 and 200. The disordered stretch occupies residues 168 to 207 (KGGQRRKRRSVNPYLQGQRLDNVVAKKSVPHFSDEDKDPE).

It belongs to the 7B2 family. As to quaternary structure, interacts with PCSK2/PC2 early in the secretory pathway. Dissociation occurs at later stages. Proteolytically cleaved in the Golgi by a furin-like convertase to generate bioactive peptides. Post-translationally, sulfated on tyrosine residues.

The protein resides in the secreted. Its function is as follows. Acts as a molecular chaperone for PCSK2/PC2, preventing its premature activation in the regulated secretory pathway. Binds to inactive PCSK2 in the endoplasmic reticulum and facilitates its transport from there to later compartments of the secretory pathway where it is proteolytically matured and activated. Also required for cleavage of PCSK2 but does not appear to be involved in its folding. Plays a role in regulating pituitary hormone secretion. The C-terminal peptide inhibits PCSK2 in vitro. This chain is Neuroendocrine protein 7B2 (SCG5), found in Sus scrofa (Pig).